The sequence spans 328 residues: Malate dehydrogenase 2 (328 aa).

12–18 (GAAGQIA) provides a ligand contact to NAD(+). Arg93 and Arg99 together coordinate substrate. Residues Asn106, Gln113, and 130-132 (VGN) each bind NAD(+). 2 residues coordinate substrate: Asn132 and Arg163. His188 (proton acceptor) is an active-site residue.

Belongs to the LDH/MDH superfamily. MDH type 2 family.

It catalyses the reaction (S)-malate + NAD(+) = oxaloacetate + NADH + H(+). Catalyzes the reversible oxidation of malate to oxaloacetate. The protein is Malate dehydrogenase 2 of Burkholderia vietnamiensis (strain G4 / LMG 22486) (Burkholderia cepacia (strain R1808)).